The sequence spans 149 residues: D-aminoacyl-tRNA deacylase (149 aa).

The Gly-cisPro motif, important for rejection of L-amino acids signature appears at 137–138; sequence GP.

The protein belongs to the DTD family. Homodimer.

The protein resides in the cytoplasm. The catalysed reaction is glycyl-tRNA(Ala) + H2O = tRNA(Ala) + glycine + H(+). The enzyme catalyses a D-aminoacyl-tRNA + H2O = a tRNA + a D-alpha-amino acid + H(+). In terms of biological role, an aminoacyl-tRNA editing enzyme that deacylates mischarged D-aminoacyl-tRNAs. Also deacylates mischarged glycyl-tRNA(Ala), protecting cells against glycine mischarging by AlaRS. Acts via tRNA-based rather than protein-based catalysis; rejects L-amino acids rather than detecting D-amino acids in the active site. By recycling D-aminoacyl-tRNA to D-amino acids and free tRNA molecules, this enzyme counteracts the toxicity associated with the formation of D-aminoacyl-tRNA entities in vivo and helps enforce protein L-homochirality. This is D-aminoacyl-tRNA deacylase from Clostridium botulinum (strain 657 / Type Ba4).